Reading from the N-terminus, the 232-residue chain is Sugar fermentation stimulation protein homolog (232 aa).

Belongs to the SfsA family.

The protein is Sugar fermentation stimulation protein homolog of Geobacter metallireducens (strain ATCC 53774 / DSM 7210 / GS-15).